A 1504-amino-acid chain; its full sequence is Nischarin (1504 aa).

The residue at position 2 (Ala-2) is an N-acetylalanine. Residues 2 to 133 (ATARTFGPER…GITAALAEEL (132 aa)) form a necessary for binding to phosphoinositide-3-P; not sufficient for targeting to endosomes region. The region spanning 11 to 121 (REAEPAKEAR…AHFLHFHFYE (111 aa)) is the PX domain. The interval 120-695 (YEINGITAAL…ERLALEWALG (576 aa)) is necessary for homooligomerization and targeting to endosomes. Residues 245 to 869 (LSVRFSATSM…LVYSDKRMVQ (625 aa)) form an interaction with PAK1 region. LRR repeat units lie at residues 288-309 (ALTTLDLSHNSVSEIDESVKLI), 311-332 (KIEFLDLSHNGLLVVDNLQHLY), 333-354 (NLVHLDLSYNKLSSLEGLHTKL), 356-377 (NIKTLNLAGNLLESLSGLHKLY), 378-399 (SLVNLDLRDNRIEQMEEVRSIG), and 403-424 (CLEHVSLLNNPLSIIPDYRTKV). Residues 463–478 (KSKLSNPEKKGGEDSR) show a composition bias toward basic and acidic residues. Disordered stretches follow at residues 463 to 501 (KSKLSNPEKKGGEDSRLSAAPCIRPSSSPPTVAPASASL), 524 to 547 (SSTDSLTPEHQPIAQGCSDSLESI), 554 to 573 (SDDLRDVPGAVGGASPEHAE), and 628 to 687 (REEG…EEER). Residues Ser-541, Ser-543, and Ser-546 each carry the phosphoserine modification. Residues 634–695 (EQGEEEDEEE…ERLALEWALG (62 aa)) adopt a coiled-coil conformation. 2 stretches are compositionally biased toward acidic residues: residues 635–649 (QGEEEDEEEEEEEDV) and 661–685 (DVEEEEGGGQGEEEEEEEEDEEAEE). The interaction with LIMK stretch occupies residues 660 to 869 (PDVEEEEGGG…LVYSDKRMVQ (210 aa)). The segment at 709 to 807 (KVLWCFLIHV…ANLHEFHADL (99 aa)) is interaction with ITGA5. Residues 1016–1104 (TPGTGGSPQG…PAPPPAEAPA (89 aa)) are disordered. Ser-1022 carries the post-translational modification Phosphoserine. Residues 1032-1043 (PAERRASNDQRP) show a composition bias toward basic and acidic residues. Residues 1063 to 1078 (PAAASASGPAKTPAPA) are compositionally biased toward low complexity. Residue Thr-1282 is modified to Phosphothreonine. Phosphoserine is present on Ser-1284.

Homooligomer. Interacts with GRB2. Interacts with PIK3R1; probably associates with the PI3-kinase complex. Interacts with IRS4. Found in a complex with ITGA5 and PAK1. Found in a complex with LIMK1 and PAK1. Interacts with ITGA5 (via cytoplasmic domain); this interaction is direct. Interacts with PAK1 (via kinase domain); this interaction is direct and is increased upon activation of PAK1. Interacts with LIMK1 (via PDZ and kinase domain); this interaction is direct. Interacts with LIMK2; this interaction depends on LIMK2 activity. Interacts with RAC1 (activated state). Interacts with STK11; this interaction may increase STK11 activity. Isoform 1, isoform 3 and isoform 4 are expressed in brain. Isoform 1 is expressed in endocrine tissues.

Its subcellular location is the cell membrane. It is found in the cytoplasm. The protein localises to the early endosome. The protein resides in the recycling endosome. Acts either as the functional imidazoline-1 receptor (I1R) candidate or as a membrane-associated mediator of the I1R signaling. Binds numerous imidazoline ligands that induces initiation of cell-signaling cascades triggering to cell survival, growth and migration. Its activation by the agonist rilmenidine induces an increase in phosphorylation of mitogen-activated protein kinases MAPK1 and MAPK3 in rostral ventrolateral medulla (RVLM) neurons that exhibited rilmenidine-evoked hypotension. Blocking its activation with efaroxan abolished rilmenidine-induced mitogen-activated protein kinase phosphorylation in RVLM neurons. Acts as a modulator of Rac-regulated signal transduction pathways. Suppresses Rac1-stimulated cell migration by interacting with PAK1 and inhibiting its kinase activity. Also blocks Pak-independent Rac signaling by interacting with RAC1 and inhibiting Rac1-stimulated NF-kB response element and cyclin D1 promoter activation. Also inhibits LIMK1 kinase activity by reducing LIMK1 'Tyr-508' phosphorylation. Inhibits Rac-induced cell migration and invasion in breast and colon epithelial cells. Inhibits lamellipodia formation, when overexpressed. Plays a role in protection against apoptosis. Involved in association with IRS4 in the enhancement of insulin activation of MAPK1 and MAPK3. When overexpressed, induces a redistribution of cell surface ITGA5 integrin to intracellular endosomal structures. This chain is Nischarin (NISCH), found in Homo sapiens (Human).